A 348-amino-acid chain; its full sequence is D-alanine--D-alanine ligase (348 aa).

The region spanning 132-334 (KRVLESIGIP…YPDLIEELVT (203 aa)) is the ATP-grasp domain. 162-217 (LARLTFPIFVKPANMGSSVGISKAQTKVELRKAIQLALTYDSRVLIEQGVVAREIE) provides a ligand contact to ATP. Asp288, Glu301, and Asn303 together coordinate Mg(2+).

This sequence belongs to the D-alanine--D-alanine ligase family. Mg(2+) is required as a cofactor. It depends on Mn(2+) as a cofactor.

Its subcellular location is the cytoplasm. It carries out the reaction 2 D-alanine + ATP = D-alanyl-D-alanine + ADP + phosphate + H(+). It participates in cell wall biogenesis; peptidoglycan biosynthesis. Functionally, cell wall formation. The protein is D-alanine--D-alanine ligase of Streptococcus pyogenes serotype M6 (strain ATCC BAA-946 / MGAS10394).